Here is an 84-residue protein sequence, read N- to C-terminus: ATP synthase subunit c (84 aa).

A run of 2 helical transmembrane segments spans residues 9–29 (IIGA…GFAI) and 54–74 (IVAG…LLFI).

It belongs to the ATPase C chain family. In terms of assembly, F-type ATPases have 2 components, F(1) - the catalytic core - and F(0) - the membrane proton channel. F(1) has five subunits: alpha(3), beta(3), gamma(1), delta(1), epsilon(1). F(0) has three main subunits: a(1), b(2) and c(10-14). The alpha and beta chains form an alternating ring which encloses part of the gamma chain. F(1) is attached to F(0) by a central stalk formed by the gamma and epsilon chains, while a peripheral stalk is formed by the delta and b chains.

The protein resides in the cell inner membrane. Its function is as follows. F(1)F(0) ATP synthase produces ATP from ADP in the presence of a proton or sodium gradient. F-type ATPases consist of two structural domains, F(1) containing the extramembraneous catalytic core and F(0) containing the membrane proton channel, linked together by a central stalk and a peripheral stalk. During catalysis, ATP synthesis in the catalytic domain of F(1) is coupled via a rotary mechanism of the central stalk subunits to proton translocation. Key component of the F(0) channel; it plays a direct role in translocation across the membrane. A homomeric c-ring of between 10-14 subunits forms the central stalk rotor element with the F(1) delta and epsilon subunits. The polypeptide is ATP synthase subunit c (Haemophilus influenzae (strain ATCC 51907 / DSM 11121 / KW20 / Rd)).